Here is a 347-residue protein sequence, read N- to C-terminus: Metacaspase-2 (347 aa).

The propeptide occupies 1-55 (MCSLITQLCDAGQLADYVGLGWLNAVSSQPYLVQALGLQPPPRRVDVDAAFRDAK). The regulates substrate access to the active site stretch occupies residues 1 to 70 (MCSLITQLCD…QPWVATPLPG (70 aa)). His158 is an active-site residue. Ca(2+)-binding residues include Asp173, Asp189, and Asp190. The active site involves Cys213. Asp220 is a Ca(2+) binding site.

Belongs to the peptidase C14B family. As to quaternary structure, monomer. Auto-proteolytic cleavage of the propeptide after Lys-55 and between the large and small subunits after Lys-268 is required for catalytic activity towards large protein substrates but is dispensable towards small oligopeptide substrates. After processing, the propeptide and the large and small subunits remain associated by non-covalent bonds. In vivo, the unprocessed enzyme appears to be the predominant form.

Its subcellular location is the recycling endosome. Activated by Ca(2+). In response to calcium binding, the 280-loop, a disordered loop consisting of residues 269-275, undergoes a conformational change which stabilizes substrates in the active site. The binding to the substrate triggers the release of the N-terminal region resulting in the activation of the enzyme. Proteolytic cleavage is required for catalytic activity towards large protein substrates. Functionally, cysteine protease that cleaves specifically after arginine or lysine residues. This Trypanosoma brucei brucei (strain 927/4 GUTat10.1) protein is Metacaspase-2.